The following is a 282-amino-acid chain: MTIQWFPGHMAKARREVTEKLKLIDIVFELTDARIPMSSRNPMIEEILQNKPKIMLLNKADKADPRVTKEWQAHFEQQGVRSLAINSVDGQGLNQIITTSKEILKEKFDRMKAKGVKPRAIRALIIGIPNVGKSTLINRLAKKNIAKTGDRPGITTSQQWVKVGKEMELLDTPGILWPKFEDEKVGLRLAVTGAIKDSIINLQDVAVYGLRFLEENYPERLKKRYDLTDIPEDTAELFDAIGTKRGCLMSGGFINYDKTTEIIIRDIRTEKFGPLTFEKPES.

The CP-type G domain maps to 14 to 178; it reads RREVTEKLKL…LLDTPGILWP (165 aa). Residues 58–61, 86–87, 130–135, and G174 contribute to the GTP site; these read NKAD, NS, and NVGKST.

The protein belongs to the TRAFAC class YlqF/YawG GTPase family. MTG1 subfamily. In terms of assembly, interacts with ctc. Interacts with the immature 50S ribosome subunit. 2 molecules of rbgA bind to one 50S subunit.

The protein resides in the cytoplasm. Its function is as follows. Essential protein that is required for a late step of 50S ribosomal subunit assembly. Has GTPase activity that is stimulated by interaction with the immature 50S ribosome subunit. Binds to the 23S rRNA. Required for the association of ribosomal proteins rplP and rpmA with the large subunit. In Bacillus pumilus (strain SAFR-032), this protein is Ribosome biogenesis GTPase A.